The following is a 427-amino-acid chain: Serine/threonine-protein kinase AFC2 (427 aa).

Residues 98–423 enclose the Protein kinase domain; sequence YKIYSKMGEG…AREALRHPFF (326 aa). Residues 104 to 112 and lysine 127 each bind ATP; that span reads MGEGTFGQV. Aspartate 223 functions as the Proton acceptor in the catalytic mechanism.

This sequence belongs to the protein kinase superfamily. CMGC Ser/Thr protein kinase family. Lammer subfamily.

The enzyme catalyses L-seryl-[protein] + ATP = O-phospho-L-seryl-[protein] + ADP + H(+). It catalyses the reaction L-threonyl-[protein] + ATP = O-phospho-L-threonyl-[protein] + ADP + H(+). The catalysed reaction is L-tyrosyl-[protein] + ATP = O-phospho-L-tyrosyl-[protein] + ADP + H(+). The protein is Serine/threonine-protein kinase AFC2 (AFC2) of Arabidopsis thaliana (Mouse-ear cress).